We begin with the raw amino-acid sequence, 122 residues long: Large ribosomal subunit protein uL14 (122 aa).

The protein belongs to the universal ribosomal protein uL14 family. In terms of assembly, part of the 50S ribosomal subunit. Forms a cluster with proteins L3 and L19. In the 70S ribosome, L14 and L19 interact and together make contacts with the 16S rRNA in bridges B5 and B8.

Binds to 23S rRNA. Forms part of two intersubunit bridges in the 70S ribosome. The sequence is that of Large ribosomal subunit protein uL14 from Streptomyces griseus subsp. griseus (strain JCM 4626 / CBS 651.72 / NBRC 13350 / KCC S-0626 / ISP 5235).